Consider the following 423-residue polypeptide: Gamma-glutamyl phosphate reductase (423 aa).

It belongs to the gamma-glutamyl phosphate reductase family.

The protein localises to the cytoplasm. It catalyses the reaction L-glutamate 5-semialdehyde + phosphate + NADP(+) = L-glutamyl 5-phosphate + NADPH + H(+). Its pathway is amino-acid biosynthesis; L-proline biosynthesis; L-glutamate 5-semialdehyde from L-glutamate: step 2/2. Its function is as follows. Catalyzes the NADPH-dependent reduction of L-glutamate 5-phosphate into L-glutamate 5-semialdehyde and phosphate. The product spontaneously undergoes cyclization to form 1-pyrroline-5-carboxylate. The chain is Gamma-glutamyl phosphate reductase from Pseudomonas fluorescens (strain Pf0-1).